The chain runs to 88 residues: Small ribosomal subunit protein uS15 (88 aa).

The protein belongs to the universal ribosomal protein uS15 family. In terms of assembly, part of the 30S ribosomal subunit. Forms a bridge to the 50S subunit in the 70S ribosome, contacting the 23S rRNA.

In terms of biological role, one of the primary rRNA binding proteins, it binds directly to 16S rRNA where it helps nucleate assembly of the platform of the 30S subunit by binding and bridging several RNA helices of the 16S rRNA. Forms an intersubunit bridge (bridge B4) with the 23S rRNA of the 50S subunit in the ribosome. The chain is Small ribosomal subunit protein uS15 from Francisella tularensis subsp. novicida (strain U112).